The chain runs to 86 residues: Protein Tat (86 aa).

The tract at residues 1-24 (MEPVDPRLEPWKHPGSQPKTACTN) is interaction with human CREBBP. Residues 1–48 (MEPVDPRLEPWKHPGSQPKTACTNCYCKKCCFHCQVCFITKALGISYG) are transactivation. Zn(2+)-binding residues include C22, C25, and C27. Residues 22–37 (CTNCYCKKCCFHCQVC) are cysteine-rich. K28 is modified (N6-acetyllysine; by host PCAF). Residues C30, H33, C34, and C37 each coordinate Zn(2+). The core stretch occupies residues 38–48 (FITKALGISYG). Over residues 48–59 (GRKKRRQRRRAH) the composition is skewed to basic residues. A disordered region spans residues 48–86 (GRKKRRQRRRAHQNSQTHQASLSKQPTSQPRGDPTGPKE). Positions 49-57 (RKKRRQRRR) match the Nuclear localization signal, RNA-binding (TAR), and protein transduction motif. Residues 49 to 86 (RKKRRQRRRAHQNSQTHQASLSKQPTSQPRGDPTGPKE) are interaction with the host capping enzyme RNGTT. 2 positions are modified to N6-acetyllysine; by host EP300 and GCN5L2: K50 and K51. 2 positions are modified to asymmetric dimethylarginine; by host PRMT6: R52 and R53. Residues 60 to 77 (QNSQTHQASLSKQPTSQP) are compositionally biased toward polar residues. K71 participates in a covalent cross-link: Glycyl lysine isopeptide (Lys-Gly) (interchain with G-Cter in ubiquitin). A Cell attachment site motif is present at residues 78 to 80 (RGD).

The protein belongs to the lentiviruses Tat family. As to quaternary structure, interacts with host CCNT1. Associates with the P-TEFb complex composed at least of Tat, P-TEFb (CDK9 and CCNT1), TAR RNA, RNA Pol II. Recruits the HATs CREBBP, TAF1/TFIID, EP300, PCAF and GCN5L2. Interacts with host KAT5/Tip60; this interaction targets the latter to degradation. Interacts with the host deacetylase SIRT1. Interacts with host capping enzyme RNGTT; this interaction stimulates RNGTT. Binds to host KDR, and to the host integrins ITGAV/ITGB3 and ITGA5/ITGB1. Interacts with host KPNB1/importin beta-1 without previous binding to KPNA1/importin alpha-1. Interacts with EIF2AK2. Interacts with host nucleosome assembly protein NAP1L1; this interaction may be required for the transport of Tat within the nucleus, since the two proteins interact at the nuclear rim. Interacts with host C1QBP/SF2P32; this interaction involves lysine-acetylated Tat. Interacts with the host chemokine receptors CCR2, CCR3 and CXCR4. Interacts with host DPP4/CD26; this interaction may trigger an anti-proliferative effect. Interacts with host LDLR. Interacts with the host extracellular matrix metalloproteinase MMP1. Interacts with host PRMT6; this interaction mediates Tat's methylation. Interacts with, and is ubiquitinated by MDM2/Hdm2. Interacts with host PSMC3 and HTATIP2. Interacts with STAB1; this interaction may overcome SATB1-mediated repression of IL2 and IL2RA (interleukin) in T cells by binding to the same domain than HDAC1. Interacts (when acetylated) with human CDK13, thereby increasing HIV-1 mRNA splicing and promoting the production of the doubly spliced HIV-1 protein Nef. Interacts with host TBP; this interaction modulates the activity of transcriptional pre-initiation complex. Interacts with host RELA. Interacts with host PLSCR1; this interaction negatively regulates Tat transactivation activity by altering its subcellular distribution. Asymmetrical arginine methylation by host PRMT6 seems to diminish the transactivation capacity of Tat and affects the interaction with host CCNT1. Post-translationally, acetylation by EP300, CREBBP, GCN5L2/GCN5 and PCAF regulates the transactivation activity of Tat. EP300-mediated acetylation of Lys-50 promotes dissociation of Tat from the TAR RNA through the competitive binding to PCAF's bromodomain. In addition, the non-acetylated Tat's N-terminus can also interact with PCAF. PCAF-mediated acetylation of Lys-28 enhances Tat's binding to CCNT1. Lys-50 is deacetylated by SIRT1. In terms of processing, polyubiquitination by host MDM2 does not target Tat to degradation, but activates its transactivation function and fosters interaction with CCNT1 and TAR RNA. Phosphorylated by EIF2AK2 on serine and threonine residues adjacent to the basic region important for TAR RNA binding and function. Phosphorylation of Tat by EIF2AK2 is dependent on the prior activation of EIF2AK2 by dsRNA.

The protein resides in the host nucleus. The protein localises to the host nucleolus. It localises to the host cytoplasm. Its subcellular location is the secreted. Its function is as follows. Transcriptional activator that increases RNA Pol II processivity, thereby increasing the level of full-length viral transcripts. Recognizes a hairpin structure at the 5'-LTR of the nascent viral mRNAs referred to as the transactivation responsive RNA element (TAR) and recruits the cyclin T1-CDK9 complex (P-TEFb complex) that will in turn hyperphosphorylate the RNA polymerase II to allow efficient elongation. The CDK9 component of P-TEFb and other Tat-activated kinases hyperphosphorylate the C-terminus of RNA Pol II that becomes stabilized and much more processive. Other factors such as HTATSF1/Tat-SF1, SUPT5H/SPT5, and HTATIP2 are also important for Tat's function. Besides its effect on RNA Pol II processivity, Tat induces chromatin remodeling of proviral genes by recruiting the histone acetyltransferases (HATs) CREBBP, EP300 and PCAF to the chromatin. This also contributes to the increase in proviral transcription rate, especially when the provirus integrates in transcriptionally silent region of the host genome. To ensure maximal activation of the LTR, Tat mediates nuclear translocation of NF-kappa-B by interacting with host RELA. Through its interaction with host TBP, Tat may also modulate transcription initiation. Tat can reactivate a latently infected cell by penetrating in it and transactivating its LTR promoter. In the cytoplasm, Tat is thought to act as a translational activator of HIV-1 mRNAs. In terms of biological role, extracellular circulating Tat can be endocytosed by surrounding uninfected cells via the binding to several surface receptors such as CD26, CXCR4, heparan sulfate proteoglycans (HSPG) or LDLR. Neurons are rarely infected, but they internalize Tat via their LDLR. Through its interaction with nuclear HATs, Tat is potentially able to control the acetylation-dependent cellular gene expression. Modulates the expression of many cellular genes involved in cell survival, proliferation or in coding for cytokines or cytokine receptors. Tat plays a role in T-cell and neurons apoptosis. Tat induced neurotoxicity and apoptosis probably contribute to neuroAIDS. Circulating Tat also acts as a chemokine-like and/or growth factor-like molecule that binds to specific receptors on the surface of the cells, affecting many cellular pathways. In the vascular system, Tat binds to ITGAV/ITGB3 and ITGA5/ITGB1 integrins dimers at the surface of endothelial cells and competes with bFGF for heparin-binding sites, leading to an excess of soluble bFGF. The sequence is that of Protein Tat from Homo sapiens (Human).